The sequence spans 814 residues: Threonine--tRNA ligase 2, cytoplasmic (814 aa).

Residues 2-72 (AAHIAQRLTV…SLREEQERAR (71 aa)) are a coiled coil. Residues 62 to 142 (RSLREEQERA…GHKQEGPCAP (81 aa)) form a disordered region. Composition is skewed to basic and acidic residues over residues 63–72 (SLREEQERAR), 88–102 (EEPK…EKGQ), and 119–137 (GNKK…HKQE). Residues 172–234 (KPIKITLADG…EQDSNVELLK (63 aa)) form the TGS domain. Residues 798–804 (KLKTLKK) carry the Nuclear localization signal motif.

This sequence belongs to the class-II aminoacyl-tRNA synthetase family.

The protein resides in the cytoplasm. Its subcellular location is the nucleus. The catalysed reaction is tRNA(Thr) + L-threonine + ATP = L-threonyl-tRNA(Thr) + AMP + diphosphate + H(+). Its function is as follows. Catalyzes the attachment of threonine to tRNA(Thr) in a two-step reaction: threonine is first activated by ATP to form Thr-AMP and then transferred to the acceptor end of tRNA(Thr). Also edits incorrectly charged tRNA(Thr) via its editing domain, at the post-transfer stage. This is Threonine--tRNA ligase 2, cytoplasmic (tars3) from Xenopus tropicalis (Western clawed frog).